Reading from the N-terminus, the 481-residue chain is Transmembrane protein 39A (481 aa).

8 helical membrane-spanning segments follow: residues 74-94, 109-129, 150-170, 182-202, 278-298, 313-333, 411-431, and 437-457; these read LFET…YINI, STSL…AVML, LCYV…GWVL, SVLK…LCCL, EVLF…LCFV, LIMV…PPHY, LLNV…YSLL, and NHTL…FKLL.

Belongs to the TMEM39 family.

The protein resides in the endoplasmic reticulum membrane. Functionally, regulates autophagy by controlling the spatial distribution and levels of the intracellular phosphatidylinositol 4-phosphate (PtdIns(4)P) pools. Modulates (PtdIns(4)P) levels by regulating the ER-to-Golgi trafficking of the phosphatidylinositide phosphatase SACM1L. In Danio rerio (Zebrafish), this protein is Transmembrane protein 39A (tmem39a).